The sequence spans 444 residues: Na(+)-translocating NADH-quinone reductase subunit A (444 aa).

The protein belongs to the NqrA family. In terms of assembly, composed of six subunits; NqrA, NqrB, NqrC, NqrD, NqrE and NqrF.

It catalyses the reaction a ubiquinone + n Na(+)(in) + NADH + H(+) = a ubiquinol + n Na(+)(out) + NAD(+). Its function is as follows. NQR complex catalyzes the reduction of ubiquinone-1 to ubiquinol by two successive reactions, coupled with the transport of Na(+) ions from the cytoplasm to the periplasm. NqrA to NqrE are probably involved in the second step, the conversion of ubisemiquinone to ubiquinol. This Shewanella frigidimarina (strain NCIMB 400) protein is Na(+)-translocating NADH-quinone reductase subunit A.